We begin with the raw amino-acid sequence, 481 residues long: MRVAIVGAGLAGLAAAIDLVDAGHQVAIYDSRPFVGGKVGSWIDADGNHIEMGLHVFFFNYANLFALMRKVGAFENLLPKAHTHTFINKGGEVGELDFRFPIGAPFNGLKAFFTTSQLTWLDKLQNALALGTSPLVRGILDYEGAMKIIRALDRISFADWFRSHGGSEGSLKRMWNPIAYALGFIDTENISARCMLTVFQMFAAKTEASKLNLLAGSPAEYLHKPILDYIQARGATLHLRRRVREIEYTETNGQTVVTGLQIADGDAVERVEADVYLAACDVPGIQRLLPEAWRKWSEFDNIYKLDAVPVATVQLRFDGWVTELGDREKRHQLDHATGLDNLLYTADADFSCFTDLALSSPKDYYRKGQGSLLQCVLTPGDPFIAMKNEDIAQHVLKQVHELFPSSRDLNMTWSNVVKLAQSLYREAPGMDPFRPDQKTPIANFFLAGSYTQQDYIDSMEGATISGRRAAKAMLEAQAIAA.

This sequence belongs to the zeta carotene desaturase family. Decylplastoquinone serves as cofactor. 6-decylubiquinone is required as a cofactor.

It carries out the reaction 9,9'-di-cis-zeta-carotene + 2 a quinone = 7,7',9,9'-tetra-cis-lycopene + 2 a quinol. It functions in the pathway carotenoid biosynthesis; lycopene biosynthesis. In terms of biological role, catalyzes the conversion of zeta-carotene to lycopene via the intermediary of neurosporene. It carries out two consecutive desaturations (introduction of double bonds) at positions C-7 and C-7'. The protein is Probable zeta-carotene desaturase (zds) of Synechococcus elongatus (strain ATCC 33912 / PCC 7942 / FACHB-805) (Anacystis nidulans R2).